A 484-amino-acid chain; its full sequence is Trigger factor (484 aa).

Residues 162–243 (GDFISIDLSA…VKSVKERELP (82 aa)) enclose the PPIase FKBP-type domain. The disordered stretch occupies residues 427 to 484 (DGNTIDTSEFFGKPPENDVTDLLDDDADGDAGVDADGDTENSAEPADADSADTAQGAG). The span at 444–476 (DVTDLLDDDADGDAGVDADGDTENSAEPADADS) shows a compositional bias: acidic residues.

Belongs to the FKBP-type PPIase family. Tig subfamily.

The protein localises to the cytoplasm. It catalyses the reaction [protein]-peptidylproline (omega=180) = [protein]-peptidylproline (omega=0). Functionally, involved in protein export. Acts as a chaperone by maintaining the newly synthesized protein in an open conformation. Functions as a peptidyl-prolyl cis-trans isomerase. The sequence is that of Trigger factor from Mycobacterium ulcerans (strain Agy99).